A 246-amino-acid polypeptide reads, in one-letter code: NAD-dependent protein deacylase (246 aa).

The Deacetylase sirtuin-type domain occupies 2-246; sequence PTAVSDAAAP…AGVCLPAMLA (245 aa). 29-49 is a binding site for NAD(+); that stretch reads GAGVSAESGVPTFRDALTGLW. Substrate contacts are provided by tyrosine 74 and arginine 77. An NAD(+)-binding site is contributed by 107 to 110; it reads QNVD. Catalysis depends on histidine 125, which acts as the Proton acceptor. The Zn(2+) site is built by cysteine 137, cysteine 140, cysteine 153, and cysteine 156. Residues 193 to 195, 219 to 221, and alanine 237 each bind NAD(+); these read GTS and NPE.

Belongs to the sirtuin family. Class III subfamily. Zn(2+) serves as cofactor.

The protein resides in the cytoplasm. It carries out the reaction N(6)-acetyl-L-lysyl-[protein] + NAD(+) + H2O = 2''-O-acetyl-ADP-D-ribose + nicotinamide + L-lysyl-[protein]. The catalysed reaction is N(6)-succinyl-L-lysyl-[protein] + NAD(+) + H2O = 2''-O-succinyl-ADP-D-ribose + nicotinamide + L-lysyl-[protein]. In terms of biological role, NAD-dependent lysine deacetylase and desuccinylase that specifically removes acetyl and succinyl groups on target proteins. Modulates the activities of several proteins which are inactive in their acylated form. This chain is NAD-dependent protein deacylase, found in Ralstonia nicotianae (strain ATCC BAA-1114 / GMI1000) (Ralstonia solanacearum).